We begin with the raw amino-acid sequence, 260 residues long: Oxidoreductase macE (260 aa).

It belongs to the oxidoreductase OpS7 family.

Its pathway is secondary metabolite biosynthesis; terpenoid biosynthesis. Oxidoreductase; part of the gene cluster that mediates the biosynthesis of macrophorins, isoprenoid epoxycyclohexenones containing cyclized drimane moieties. The first step of the pathway is the synthesis of 6-methylsalicylic acid (6-MSA) by the polyketide synthase macA. 6-MSA is then converted to m-cresol by the decarboxylase macB. The cytochrome P450 monooxygenase macC then catalyzes the oxidation of m-cresol to toluquinol. Epoxidation of toluquinol is then performed by the short chain dehydrogenase macD, with the help of macE, and a further prenylation by macG leads to 7-deacetoxyyanuthone A. The next step is the hydroxylation of C-22 of 7-deacetoxyyanuthone A by the cytochrome P450 monooxygenase macH to yield 22-deacetylyanuthone A. O-Mevalon transferase macI then attaches mevalon to the hydroxyl group of 22-deacetylyanuthone A to produce yanuthone E. The terpene cyclase macJ catalyzes the cyclization of 22-deacetylyanuthone A to macrophorin A. MacJ is also able to catalyze cyclization of yanuthone E and 7-deacetoxyyanuthone A to their corresponding macrophorins. The macJ products can be further modified by macH and macJ, as well as by the FAD-dependent monooxygenase macF, to produce additional macrophorins, including 4'-oxomacrophorin A, 4'-oxomacrophorin D and 4'-oxomacrophorin E. This Penicillium terrestre protein is Oxidoreductase macE.